We begin with the raw amino-acid sequence, 243 residues long: MNRIKAVGYENNELKEKAQLLADQLNLQLDQNADTCLFVTPEKLTLKIRNFSLMFADFSTMTWSKRRGEGKKQGLIRACKPTKGIKILDATAGWGKDAAILATFGADVLMLERHPVMAALLADALSRRNEADIQKMCLSLIASDAISFLHSLQEKDYPDIIYIDPMHPERNKSALVKKEMQVLQQLIGTDYDAMELIKLSLSHVKSRVVVKWPQKVKPLLPPDASIDGKTVRFDIYMPQFSSN.

S-adenosyl-L-methionine-binding positions include 112–113 (ER) and D164.

This sequence belongs to the methyltransferase superfamily. RsmJ family.

It is found in the cytoplasm. It carries out the reaction guanosine(1516) in 16S rRNA + S-adenosyl-L-methionine = N(2)-methylguanosine(1516) in 16S rRNA + S-adenosyl-L-homocysteine + H(+). Its function is as follows. Specifically methylates the guanosine in position 1516 of 16S rRNA. In Legionella pneumophila (strain Corby), this protein is Ribosomal RNA small subunit methyltransferase J.